A 197-amino-acid polypeptide reads, in one-letter code: Crossover junction endodeoxyribonuclease RuvC (197 aa).

Catalysis depends on residues aspartate 7, glutamate 68, and aspartate 141. Mg(2+) contacts are provided by aspartate 7, glutamate 68, and aspartate 141. Low complexity-rich tracts occupy residues 165 to 181 (AAPA…TPAR) and 188 to 197 (APARRPAGAS). The interval 165–197 (AAPAAPVSRPAPATPARRSPRPAAPARRPAGAS) is disordered.

This sequence belongs to the RuvC family. In terms of assembly, homodimer which binds Holliday junction (HJ) DNA. The HJ becomes 2-fold symmetrical on binding to RuvC with unstacked arms; it has a different conformation from HJ DNA in complex with RuvA. In the full resolvosome a probable DNA-RuvA(4)-RuvB(12)-RuvC(2) complex forms which resolves the HJ. It depends on Mg(2+) as a cofactor.

Its subcellular location is the cytoplasm. The catalysed reaction is Endonucleolytic cleavage at a junction such as a reciprocal single-stranded crossover between two homologous DNA duplexes (Holliday junction).. Functionally, the RuvA-RuvB-RuvC complex processes Holliday junction (HJ) DNA during genetic recombination and DNA repair. Endonuclease that resolves HJ intermediates. Cleaves cruciform DNA by making single-stranded nicks across the HJ at symmetrical positions within the homologous arms, yielding a 5'-phosphate and a 3'-hydroxyl group; requires a central core of homology in the junction. The consensus cleavage sequence is 5'-(A/T)TT(C/G)-3'. Cleavage occurs on the 3'-side of the TT dinucleotide at the point of strand exchange. HJ branch migration catalyzed by RuvA-RuvB allows RuvC to scan DNA until it finds its consensus sequence, where it cleaves and resolves the cruciform DNA. This Frankia alni (strain DSM 45986 / CECT 9034 / ACN14a) protein is Crossover junction endodeoxyribonuclease RuvC.